Consider the following 203-residue polypeptide: EVTKPETINYRTLKPEMDGLFCERIFGPAKDWECHCGKYKRVRHRGIVCERCGVEVTESRVRRHRMGYIKLAAPVAHVWYLKGIPSYISILLDMPLRDVEQIVYFNSYVVLSPGNAETLSYKQLLSEDQWLEIEDQIYSEDSTLQGVEVGIGAEALLRLLADINLEQEAETLREEITTAKGQKRAKLIKRLRVIDNFIATGSK.

Residues cysteine 34, cysteine 36, cysteine 49, and cysteine 52 each coordinate Zn(2+).

It belongs to the RNA polymerase beta' chain family. RpoC1 subfamily. In terms of assembly, in cyanobacteria the RNAP catalytic core is composed of 2 alpha, 1 beta, 1 beta', 1 gamma and 1 omega subunit. When a sigma factor is associated with the core the holoenzyme is formed, which can initiate transcription. Zn(2+) is required as a cofactor.

It carries out the reaction RNA(n) + a ribonucleoside 5'-triphosphate = RNA(n+1) + diphosphate. DNA-dependent RNA polymerase catalyzes the transcription of DNA into RNA using the four ribonucleoside triphosphates as substrates. The sequence is that of DNA-directed RNA polymerase subunit gamma (rpoC1) from Fischerella muscicola.